A 2339-amino-acid chain; its full sequence is Inverse autotransporter adhesin YeeJ (2339 aa).

Positions 1–26 (MGIKLRRLTAGICLITQLAFPMAAAA) are cleaved as a signal peptide. The 49-residue stretch at 50-98 (VPYTLGALESAQSVAERFGISVAELRKLNQFRTFARGFDNVRQGDELDV) folds into the LysM domain. Residues 125 to 400 (TSQQIGSLLA…SRYDLVDRNN (276 aa)) form an inverse autotransporter region. The invasin 3 domain stretch occupies residues 513–605 (QKDSSVSLST…GVDAAKAPAV (93 aa)). 13 Big-1 domains span residues 721–815 (IATL…VSFV), 822–913 (QVDL…VNFI), 920–1017 (ALTL…MTFV), 1024–1121 (VVVL…VTFV), 1128–1221 (QVVL…VHFI), 1229–1331 (IIEL…SINV), 1339–1432 (HLTL…VTYV), 1439–1535 (EITL…VNFI), 1542–1639 (QVNL…VTLI), 1646–1730 (KLAS…PTEV), 1746–1837 (ITSL…LEAI), 1840–1934 (KLTL…VKVT), and 1942–2034 (VASF…ITLV). The interval 2236 to 2339 (KSWWVNAGEA…FAYATCYKNL (104 aa)) is C-type lectin domain.

It belongs to the intimin/invasin family.

It is found in the cell outer membrane. Its function is as follows. A cryptic inverse autotransporter, it is not expressed in wild-type strain MG1655. Upon overexpression shows increased adherence to polyvinyl chloride (PVC) plates and increased mature biofilm formation. Probably binds peptidoglycan. The chain is Inverse autotransporter adhesin YeeJ (yeeJ) from Escherichia coli (strain K12).